Reading from the N-terminus, the 682-residue chain is Protein asunder (682 aa).

Positions 517 to 570 form a coiled coil; that stretch reads NGARLKLSKAKDQYRLLYRELEQLIHLNATTVHHKNLLESLQSLRAAYGEAKSE. The span at 571-583 shows a compositional bias: polar residues; that stretch reads PNSSLLRSYTESP. A disordered region spans residues 571-612; the sequence is PNSSLLRSYTESPHSPERLEPIPSGGSSGSNSNSLLKASKRR. The Nuclear localization signal (NLS) motif lies at 606–612; sequence LKASKRR.

It belongs to the Integrator subunit 13 family. Belongs to the multiprotein complex Integrator, at least composed of IntS1, IntS2, IntS3, IntS4, omd/IntS5, IntS6, defl/IntS7, IntS8, IntS9, IntS10, IntS11, IntS12, asun/IntS13, IntS14 and IntS15. The core complex associates with protein phosphatase 2A subunits mts/PP2A and Pp2A-29B, to form the Integrator-PP2A (INTAC) complex. In terms of processing, phosphorylated.

The protein resides in the nucleus. It is found in the cytoplasm. Its subcellular location is the perinuclear region. Functionally, component of the integrator complex, a multiprotein complex that terminates RNA polymerase II (Pol II) transcription in the promoter-proximal region of genes. The integrator complex provides a quality checkpoint during transcription elongation by driving premature transcription termination of transcripts that are unfavorably configured for transcriptional elongation: the complex terminates transcription by (1) catalyzing dephosphorylation of the C-terminal domain (CTD) of Pol II subunit Polr2A/Rbp1 and Spt5, and (2) degrading the exiting nascent RNA transcript via endonuclease activity. The integrator complex is also involved in the 3'-end processing of the U7 snRNA, and also the spliceosomal snRNAs U1, U2, U4 and U5. This Drosophila ananassae (Fruit fly) protein is Protein asunder (asun).